The primary structure comprises 680 residues: Potassium-transporting ATPase ATP-binding subunit (680 aa).

The next 4 helical transmembrane spans lie at 37 to 57 (VIFV…LDVA), 69 to 89 (IAAW…VAEG), 223 to 243 (ILLS…WGLA), and 257 to 277 (ALLV…IGIA). D307 (4-aspartylphosphate intermediate) is an active-site residue. ATP contacts are provided by residues D344, E348, 375–382 (FTAETRLS), and K393. D516 and D520 together coordinate Mg(2+). The next 3 helical transmembrane spans lie at 586 to 606 (FAII…LNIM), 614 to 634 (AILS…PLAL), and 652 to 672 (LLVY…LIDL).

It belongs to the cation transport ATPase (P-type) (TC 3.A.3) family. Type IA subfamily. In terms of assembly, the system is composed of three essential subunits: KdpA, KdpB and KdpC.

The protein localises to the cell inner membrane. The catalysed reaction is K(+)(out) + ATP + H2O = K(+)(in) + ADP + phosphate + H(+). Its function is as follows. Part of the high-affinity ATP-driven potassium transport (or Kdp) system, which catalyzes the hydrolysis of ATP coupled with the electrogenic transport of potassium into the cytoplasm. This subunit is responsible for energy coupling to the transport system and for the release of the potassium ions to the cytoplasm. The sequence is that of Potassium-transporting ATPase ATP-binding subunit from Rhizobium meliloti (strain 1021) (Ensifer meliloti).